A 607-amino-acid chain; its full sequence is Polyphenol oxidase, chloroplastic (607 aa).

A chloroplast-targeting transit peptide spans Met-1–Gly-103. The segment at Arg-39–Gly-73 is disordered. A compositionally biased stretch (polar residues) spans Val-50 to Thr-64. Cystine bridges form between Cys-114–Cys-129 and Cys-128–Cys-191. Positions 190, 211, 220, 342, 346, and 375 each coordinate Cu cation. The segment at residues Cys-194–His-211 is a cross-link (2'-(S-cysteinyl)-histidine (Cys-His)).

This sequence belongs to the tyrosinase family. Cu(2+) serves as cofactor.

The protein resides in the plastid. Its subcellular location is the chloroplast thylakoid lumen. It carries out the reaction 2 catechol + O2 = 2 1,2-benzoquinone + 2 H2O. Catalyzes the oxidation of mono- and o-diphenols to o-diquinones. The sequence is that of Polyphenol oxidase, chloroplastic from Vitis vinifera (Grape).